We begin with the raw amino-acid sequence, 206 residues long: Small ribosomal subunit protein uS4 (206 aa).

One can recognise an S4 RNA-binding domain in the interval 96–156; the sequence is GRLDNVVYRM…EKSKKQARIK (61 aa).

The protein belongs to the universal ribosomal protein uS4 family. As to quaternary structure, part of the 30S ribosomal subunit. Contacts protein S5. The interaction surface between S4 and S5 is involved in control of translational fidelity.

In terms of biological role, one of the primary rRNA binding proteins, it binds directly to 16S rRNA where it nucleates assembly of the body of the 30S subunit. With S5 and S12 plays an important role in translational accuracy. In Actinobacillus succinogenes (strain ATCC 55618 / DSM 22257 / CCUG 43843 / 130Z), this protein is Small ribosomal subunit protein uS4.